Here is a 339-residue protein sequence, read N- to C-terminus: 3-isopropylmalate dehydrogenase (339 aa).

Positions 88, 98, 122, and 212 each coordinate substrate. Positions 212, 236, and 240 each coordinate Mg(2+). Residue 272 to 284 (GSAPDIAGQGIAD) participates in NAD(+) binding.

The protein belongs to the isocitrate and isopropylmalate dehydrogenases family. LeuB type 2 subfamily. As to quaternary structure, homodimer. Requires Mg(2+) as cofactor. The cofactor is Mn(2+).

Its subcellular location is the cytoplasm. It carries out the reaction (2R,3S)-3-isopropylmalate + NAD(+) = 4-methyl-2-oxopentanoate + CO2 + NADH. The protein operates within amino-acid biosynthesis; L-leucine biosynthesis; L-leucine from 3-methyl-2-oxobutanoate: step 3/4. In terms of biological role, catalyzes the oxidation of 3-carboxy-2-hydroxy-4-methylpentanoate (3-isopropylmalate) to 3-carboxy-4-methyl-2-oxopentanoate. The product decarboxylates to 4-methyl-2 oxopentanoate. The chain is 3-isopropylmalate dehydrogenase from Corynebacterium diphtheriae (strain ATCC 700971 / NCTC 13129 / Biotype gravis).